The sequence spans 402 residues: Bacteriochlorophyllide c C-7(1)-hydroxylase (402 aa).

Residues 104–359 enclose the Radical SAM core domain; sequence VIGMNQDIIN…IKYQDRFDMP (256 aa). Positions 120, 129, and 132 each coordinate [4Fe-4S] cluster.

Belongs to the radical SAM superfamily. The cofactor is [4Fe-4S] cluster.

It catalyses the reaction a bacteriochlorophyllide c + 2 S-adenosyl-L-methionine + H2O = a bacteriochlorophyllide e + 2 5'-deoxyadenosine + 2 L-methionine + 2 H(+). It carries out the reaction a bacteriochlorophyllide d + 2 S-adenosyl-L-methionine + H2O = a bacteriochlorophyllide f + 2 5'-deoxyadenosine + 2 L-methionine + 2 H(+). It participates in porphyrin-containing compound metabolism; bacteriochlorophyll biosynthesis. Functionally, involved in the biosynthesis of bacteriochlorophyll e (BChl e). Catalyzes two consecutive hydroxylation reactions of the C-7 methyl group of bacteriochlorophyllide c (BChlide c) to form a geminal diol intermediate that spontaneously dehydrates to produce the formyl group of bacteriochlorophyllide e (BChlide e). Also able to catalyze the same reaction for bacteriochlorophyllide d (BChlide d) to give rise to bacteriochlorophyllide f (BChlide f). This Chlorobaculum limnaeum protein is Bacteriochlorophyllide c C-7(1)-hydroxylase.